A 925-amino-acid polypeptide reads, in one-letter code: Serine/threonine-protein kinase SIK2 (925 aa).

The region spanning 20–271 (YDIEGTLGKG…IAQIKEHKWM (252 aa)) is the Protein kinase domain. The residue at position 25 (Thr-25) is a Phosphothreonine. Residues 26–34 (LGKGNFAVV) and Lys-49 each bind ATP. The residue at position 53 (Lys-53) is an N6-acetyllysine; by EP300. Residue Asp-142 is the Proton acceptor of the active site. Thr-175 carries the phosphothreonine modification. Residues 295–335 (EFNEQVLRLMHSLGIDQQKTIESLQNKSYNHFAAIYFLLVE) form the UBA domain. At Ser-534 the chain carries Phosphoserine. The interval 564 to 586 (ALSSQKREVHNRSPVSFREGRRA) is disordered. Ser-587 bears the Phosphoserine mark. Disordered regions lie at residues 630–674 (PNLA…PRQS), 742–776 (SSYP…PLSP), and 800–895 (QPLP…SSYD). Low complexity-rich tracts occupy residues 648 to 659 (QEEVSQQQESVS) and 742 to 756 (SSYP…LPRQ). Polar residues predominate over residues 765 to 774 (APPFSLTQPL). Over residues 808-820 (PRAAPLPTQLQQQ) the composition is skewed to low complexity. The span at 821-833 (QPPPPPPPPPPRQ) shows a compositional bias: pro residues.

Belongs to the protein kinase superfamily. CAMK Ser/Thr protein kinase family. SNF1 subfamily. As to quaternary structure, interacts with and phosphorylates TORC2/CRTC2. Mg(2+) serves as cofactor. Post-translationally, phosphorylated at Thr-175 by STK11/LKB1 in complex with STE20-related adapter-alpha (STRADA) pseudo kinase and CAB39. Phosphorylated at Thr-484 in response to insulin in adipocytes. Acetylation at Lys-53 inhibits kinase activity. Deacetylated by HDAC6.

It is found in the cytoplasm. It localises to the endoplasmic reticulum membrane. The catalysed reaction is L-seryl-[protein] + ATP = O-phospho-L-seryl-[protein] + ADP + H(+). It catalyses the reaction L-threonyl-[protein] + ATP = O-phospho-L-threonyl-[protein] + ADP + H(+). Activated by phosphorylation on Thr-175. Serine/threonine-protein kinase that plays a role in many biological processes such as fatty acid oxidation, autophagy, immune response or glucose metabolism. Phosphorylates 'Ser-794' of IRS1 in insulin-stimulated adipocytes, potentially modulating the efficiency of insulin signal transduction. Inhibits CREB activity by phosphorylating and repressing TORCs, the CREB-specific coactivators. Phosphorylates EP300 and thus inhibits its histone acetyltransferase activity. In turn, regulates the DNA-binding ability of several transcription factors such as PPARA or MLXIPL. Also plays a role in thymic T-cell development. The protein is Serine/threonine-protein kinase SIK2 (SIK2) of Pongo abelii (Sumatran orangutan).